The primary structure comprises 86 residues: MKFLLIGLIRFYQYAISPLIGPRCRFYPSCSHYTLEAIRVHGALRGGYLGARRLLRCHPWHPGGYDPVPERQEQACACHRTAKPGK.

Belongs to the UPF0161 family.

The protein resides in the cell inner membrane. Its function is as follows. Could be involved in insertion of integral membrane proteins into the membrane. In Pseudomonas aeruginosa (strain LESB58), this protein is Putative membrane protein insertion efficiency factor.